Here is a 338-residue protein sequence, read N- to C-terminus: D-erythrose-4-phosphate dehydrogenase (338 aa).

11–12 is an NAD(+) binding site; it reads RI. Residues 153-155, Arg199, 212-213, and Arg235 contribute to the substrate site; these read SCT and TK. Cys154 functions as the Nucleophile in the catalytic mechanism. Asn317 contributes to the NAD(+) binding site.

It belongs to the glyceraldehyde-3-phosphate dehydrogenase family. Epd subfamily. In terms of assembly, homotetramer.

The protein localises to the cytoplasm. The catalysed reaction is D-erythrose 4-phosphate + NAD(+) + H2O = 4-phospho-D-erythronate + NADH + 2 H(+). It participates in cofactor biosynthesis; pyridoxine 5'-phosphate biosynthesis; pyridoxine 5'-phosphate from D-erythrose 4-phosphate: step 1/5. In terms of biological role, catalyzes the NAD-dependent conversion of D-erythrose 4-phosphate to 4-phosphoerythronate. The polypeptide is D-erythrose-4-phosphate dehydrogenase (Shewanella piezotolerans (strain WP3 / JCM 13877)).